A 1372-amino-acid chain; its full sequence is DNA-directed RNA polymerase subunit beta (1372 aa).

It belongs to the RNA polymerase beta chain family. In terms of assembly, the RNAP catalytic core consists of 2 alpha, 1 beta, 1 beta' and 1 omega subunit. When a sigma factor is associated with the core the holoenzyme is formed, which can initiate transcription.

It carries out the reaction RNA(n) + a ribonucleoside 5'-triphosphate = RNA(n+1) + diphosphate. Functionally, DNA-dependent RNA polymerase catalyzes the transcription of DNA into RNA using the four ribonucleoside triphosphates as substrates. The chain is DNA-directed RNA polymerase subunit beta from Nitratidesulfovibrio vulgaris (strain ATCC 29579 / DSM 644 / CCUG 34227 / NCIMB 8303 / VKM B-1760 / Hildenborough) (Desulfovibrio vulgaris).